The chain runs to 347 residues: tRNA N6-adenosine threonylcarbamoyltransferase (347 aa).

Histidine 113 and histidine 117 together coordinate Fe cation. Residues 136–140, aspartate 170, glycine 183, aspartate 187, and asparagine 282 each bind substrate; that span reads LVSGG. Aspartate 310 is a Fe cation binding site.

Belongs to the KAE1 / TsaD family. Requires Fe(2+) as cofactor.

Its subcellular location is the cytoplasm. The enzyme catalyses L-threonylcarbamoyladenylate + adenosine(37) in tRNA = N(6)-L-threonylcarbamoyladenosine(37) in tRNA + AMP + H(+). Functionally, required for the formation of a threonylcarbamoyl group on adenosine at position 37 (t(6)A37) in tRNAs that read codons beginning with adenine. Is involved in the transfer of the threonylcarbamoyl moiety of threonylcarbamoyl-AMP (TC-AMP) to the N6 group of A37, together with TsaE and TsaB. TsaD likely plays a direct catalytic role in this reaction. This Cutibacterium acnes (strain DSM 16379 / KPA171202) (Propionibacterium acnes) protein is tRNA N6-adenosine threonylcarbamoyltransferase.